The sequence spans 508 residues: Protein DETOXIFICATION 52 (508 aa).

12 helical membrane passes run isoleucine 48 to isoleucine 68, leucine 78 to methionine 98, valine 122 to isoleucine 142, alanine 156 to leucine 176, leucine 189 to serine 209, alanine 222 to leucine 242, isoleucine 270 to isoleucine 290, glycine 300 to valine 320, isoleucine 341 to valine 361, isoleucine 368 to leucine 388, isoleucine 415 to tyrosine 437, and glycine 441 to threonine 463.

This sequence belongs to the multi antimicrobial extrusion (MATE) (TC 2.A.66.1) family. As to expression, detected in the part of the veins in cotyledons of 6-day-old seedlings and the basal parts of the petioles in older plants. Highly expressed in the vascular tissues of hypocotyl in dark-grown seedlings.

It is found in the late endosome membrane. Functionally, may act as a negative regulator of hypocotyl cell elongation in the light. The chain is Protein DETOXIFICATION 52 from Arabidopsis thaliana (Mouse-ear cress).